Consider the following 181-residue polypeptide: NADH-quinone oxidoreductase subunit I (181 aa).

4Fe-4S ferredoxin-type domains lie at 52-81 (TRDS…LKKG) and 91-120 (KFFR…LTPD). The [4Fe-4S] cluster site is built by Cys61, Cys64, Cys67, Cys71, Cys100, Cys103, Cys106, and Cys110.

This sequence belongs to the complex I 23 kDa subunit family. As to quaternary structure, NDH-1 is composed of 13 different subunits. Subunits NuoA, H, J, K, L, M, N constitute the membrane sector of the complex. [4Fe-4S] cluster serves as cofactor.

The protein resides in the cell inner membrane. The catalysed reaction is a quinone + NADH + 5 H(+)(in) = a quinol + NAD(+) + 4 H(+)(out). Functionally, NDH-1 shuttles electrons from NADH, via FMN and iron-sulfur (Fe-S) centers, to quinones in the respiratory chain. The immediate electron acceptor for the enzyme in this species is believed to be ubiquinone. Couples the redox reaction to proton translocation (for every two electrons transferred, four hydrogen ions are translocated across the cytoplasmic membrane), and thus conserves the redox energy in a proton gradient. The sequence is that of NADH-quinone oxidoreductase subunit I from Blochmanniella pennsylvanica (strain BPEN).